The primary structure comprises 594 residues: AT-rich interactive domain-containing protein 5A (594 aa).

The segment at 1–56 (MAAPVKGNRKQSTEGDALDPPASPKPAGKQNGIQNPISLEDSPEAGGEREEEQERE) is disordered. The interval 1–300 (MAAPVKGNRK…AVHLPESPQS (300 aa)) is interaction with SOX9. Serine 23 is modified (phosphoserine). The ARID domain occupies 55–147 (REEEQAFLVS…LVLPYVRHLK (93 aa)). Residues lysine 85 and lysine 94 each participate in a glycyl lysine isopeptide (Lys-Gly) (interchain with G-Cter in ubiquitin) cross-link. The segment at 146 to 223 (LKGEDDKPLP…NSTEQQGLAS (78 aa)) is disordered. The segment covering 165 to 189 (MAKENRGDDGATERPKKAKEERRMD) has biased composition (basic and acidic residues). Residues serine 256 and serine 289 each carry the phosphoserine modification. Disordered regions lie at residues 281–331 (RHGA…EAQA) and 426–454 (AESP…GAAH). A compositionally biased stretch (polar residues) spans 297–306 (SPQSPKGLTE). A phosphoserine mark is found at serine 438 and serine 463.

As to quaternary structure, interacts with SOX9. Interacts with ESR1. Interacts with RORC. Phosphorylated by MAPK14 on serine residues involving a TLR4 signaling pathway upon lipopolysaccharide (LPS) stimulation leading to its ubiquitination and proteasomal degradation. Post-translationally, ubiquitinated leading to proteasomal degradation; involving WWP1 linked to MAPK14-mediated phosphorylation upon LPS stimulation.

It localises to the nucleus. In terms of biological role, DNA-binding protein that may regulate transcription and act as a repressor by binding to AT-rich stretches in the promoter region of target genes. May positively regulate chondrocyte-specific transcription such as of COL2A1 in collaboration with SOX9 and positively regulate histone H3 acetylation at chondrocyte-specific genes. May stimulate early-stage chondrocyte differentiation and inhibit later stage differention. Can repress ESR1-mediated transcriptional activation; proposed to act as corepressor for selective nuclear hormone receptors. As an RNA-binding protein, involved in the regulation of inflammatory response by stabilizing selective inflammation-related mRNAs, such as STAT3 and TBX21. Also stabilizes IL6 mRNA. Binds to stem loop structures located in the 3'UTRs of IL6, STAT3 and TBX21 mRNAs; at least for STAT3 prevents binding of ZC3H12A to the mRNA stem loop structure thus inhibiting its degradation activity. Contributes to elevated IL6 levels possibly implicated in autoimmunity processes. IL6-dependent stabilization of STAT3 mRNA may promote differentiation of naive CD4+ T-cells into T-helper Th17 cells. In CD4+ T-cells may also inhibit RORC-induced Th17 cell differentiation independently of IL6 signaling. Stabilization of TBX21 mRNA contributes to elevated interferon-gamma secretion in Th1 cells possibly implicated in the establishment of septic shock. Stabilizes TNFRSF4/OX40 mRNA by binding to the conserved stem loop structure in its 3'UTR; thereby competing with the mRNA-destabilizing functions of RC3H1 and endoribonuclease ZC3H12A. This Homo sapiens (Human) protein is AT-rich interactive domain-containing protein 5A (ARID5A).